The following is a 340-amino-acid chain: COP9 signalosome complex subunit 5 (340 aa).

The region spanning 52–189 (VRISATALIK…IGAFRTYPAD (138 aa)) is the MPN domain. Residues H135, H137, and D148 each coordinate Zn(2+). Positions 135-148 (HSHPGYGCWLSGID) match the JAMM motif motif.

The protein belongs to the peptidase M67A family. CSN5 subfamily. As to quaternary structure, component of the COP9 signalosome (CSN) complex.

The protein resides in the cytoplasm. It localises to the nucleus. Catalytic Component of the COP9 signalosome (CSN) complex that acts as an regulator of the ubiquitin (Ubl) conjugation pathway by mediating the deneddylation of the cullin subunit of SCF-type E3 ubiquitin-protein ligase complexes. The chain is COP9 signalosome complex subunit 5 (RRI1) from Gibberella zeae (strain ATCC MYA-4620 / CBS 123657 / FGSC 9075 / NRRL 31084 / PH-1) (Wheat head blight fungus).